A 195-amino-acid chain; its full sequence is Heterogeneous nuclear ribonucleoprotein A/B (195 aa).

The segment at 1–23 (EEVADGQAHGEXVYREEHHEGEK) is disordered. Positions 12–23 (XVYREEHHEGEK) are enriched in basic and acidic residues. In terms of domain architecture, RRM spans 32-48 (EETKLFVGALSWETTEK). R119 and R122 each carry asymmetric dimethylarginine. Position 173 is a phosphoserine; by CK2 (S173).

Post-translationally, extensively phosphorylated on tyrosine residues.

It localises to the cytoplasm. The protein localises to the nucleus. May regulate mRNA translation and stability. It binds to poly(A) and poly(U) regions of RNA. This binding is inhibited when the protein is phosphorylated. The sequence is that of Heterogeneous nuclear ribonucleoprotein A/B from Artemia salina (Brine shrimp).